A 139-amino-acid chain; its full sequence is Large ribosomal subunit protein uL16 (139 aa).

Basic residues predominate over residues 1–17; that stretch reads MLMPKRVKYRKTQRGRM. The interval 1 to 24 is disordered; sequence MLMPKRVKYRKTQRGRMKGNSGRG.

Belongs to the universal ribosomal protein uL16 family. In terms of assembly, part of the 50S ribosomal subunit.

Functionally, binds 23S rRNA and is also seen to make contacts with the A and possibly P site tRNAs. This is Large ribosomal subunit protein uL16 from Pelodictyon phaeoclathratiforme (strain DSM 5477 / BU-1).